A 623-amino-acid chain; its full sequence is Kelch repeat and BTB domain-containing protein 11 (623 aa).

The segment at 1–129 is disordered; sequence MEHAVAPCVL…PEEPGEPAPV (129 aa). Positions 12 to 31 are enriched in low complexity; the sequence is PGTEPGAAGESESEGAASPA. Over residues 42–55 the composition is skewed to polar residues; sequence CFSSGEESPPQSLA. A phosphoserine mark is found at S64, S67, S87, and S107. A compositionally biased stretch (low complexity) spans 79–91; it reads EAGSAGAASPEEL. The region spanning 140 to 196 is the BTB domain; it reads PDLVLEVSGRRLRAHKAVLAARSDYFRARASRDVLRVQGVSLTALRLLLADAYSGRM. Kelch repeat units lie at residues 311–359, 360–412, 413–455, and 458–500; these read RPQS…VLYN, YLFV…ALDG, HLYA…ATTC, and EIYV…ALDG.

The protein is Kelch repeat and BTB domain-containing protein 11 (KBTBD11) of Homo sapiens (Human).